Here is a 31-residue protein sequence, read N- to C-terminus: 23S rRNA methylase leader peptide (31 aa).

Its function is as follows. This peptide is involved in the control mechanism of the synthesis of the erythromycin resistance protein. The sequence is that of 23S rRNA methylase leader peptide (ermC) from Escherichia coli.